A 151-amino-acid polypeptide reads, in one-letter code: MELPEPELIRQSWREVSRSPLEHGTVLFARLFDLEPDLLPLFQYNCRQFSSPEDCLSSPEFLDHIRKVMLVIDAAVTNVEDLSSLEEYLAGLGRKHRAVGVKLSSFSTVGESLLYMLEKCLGPAFTPATRAAWSQLYGAVVQAMSRGWGGE.

One can recognise a Globin domain in the interval methionine 1–glycine 149. Residues histidine 64 and histidine 96 each contribute to the heme b site.

Belongs to the globin family. In terms of assembly, monomer. Homodimer and homotetramer; disulfide-linked. Mainly monomeric but also detected as part of homodimers and homotetramers. Interacts with 14-3-3 proteins; regulates the phosphorylation of NGB. Could interact (ferrous form) with G-alpha(i) proteins (GTP-bound form). Post-translationally, phosphorylated during hypoxia by ERK1/ERK2. Phosphorylation regulates the heme pocket hexacoordination preventing the association of His-64 with the heme metal center. Thereby, promotes the access of dioxygen and nitrite to the heme and stimulates the nitrite reductase activity. Phosphorylation during hypoxia is stabilized by 14-3-3 proteins.

The protein resides in the cytoplasm. It localises to the cytosol. The protein localises to the mitochondrion matrix. It catalyses the reaction Fe(III)-heme b-[protein] + nitric oxide + H2O = Fe(II)-heme b-[protein] + nitrite + 2 H(+). Its function is as follows. Monomeric globin with a bis-histidyl six-coordinate heme-iron atom through which it can bind dioxygen, carbon monoxide and nitric oxide. Could help transport oxygen and increase its availability to the metabolically active neuronal tissues, though its low quantity in tissues as well as its high affinity for dioxygen, which may limit its oxygen-releasing ability, argue against it. The ferrous/deoxygenated form exhibits a nitrite reductase activity and it could produce nitric oxide which in turn inhibits cellular respiration in response to hypoxia. In its ferrous/deoxygenated state, it may also exhibit GDI (Guanine nucleotide Dissociation Inhibitor) activity toward heterotrimeric G-alpha proteins, thereby regulating signal transduction to facilitate neuroprotective responses in the wake of hypoxia and associated oxidative stress. The chain is Neuroglobin from Bos taurus (Bovine).